The following is a 250-amino-acid chain: Acyl-coenzyme A diphosphatase fit1 (250 aa).

Topologically, residues 1–23 (MTEKTASHYWNEETSILKLRRKD) are cytoplasmic. A helical transmembrane segment spans residues 24–44 (ILLFEIYATTLLLGSIYSIYV). The Lumenal segment spans residues 45-58 (DKWSITSYFGNSKN). The chain crosses the membrane as a helical span at residues 59–79 (LINLIFVKRGWFWTSLVYFYH). Over 80-95 (AWDQKRNKIDFKFISR) the chain is Cytoplasmic. The helical transmembrane segment at 96 to 116 (YIVATLWWMFVTQWFIGPGLI) threads the bilayer. Residues 117 to 160 (DRTFALSGGSCKNFDGDSSVFIPLTASTCKGLNGSWSGGHDLSG) lie on the Lumenal side of the membrane. N149 is a glycosylation site (N-linked (GlcNAc...) asparagine). H161 is an active-site residue. The helical transmembrane segment at 161–181 (HVFLLTHSSLFMLSENFSFIL) threads the bilayer. Residues 182 to 191 (NNGIKATSTK) lie on the Cytoplasmic side of the membrane. Residues 192 to 212 (VLFGLLGLWWWMLFVTASFYH) traverse the membrane as a helical segment. H212 is an active-site residue. Residue T213 is a topological domain, lumenal. A helical membrane pass occupies residues 214 to 234 (TFEKCTGFFSGILEWSIVYVF). The Cytoplasmic segment spans residues 235–250 (SSRMPAVADLLGSSDY).

It belongs to the FIT family. Fungal FIT2B/SCS3 subfamily.

It is found in the endoplasmic reticulum membrane. It catalyses the reaction an acyl-CoA + H2O = an acyl-4'-phosphopantetheine + adenosine 3',5'-bisphosphate + 2 H(+). The catalysed reaction is (9Z)-octadecenoyl-CoA + H2O = S-(9Z-octadecenoyl)-4'-phosphopantetheine + adenosine 3',5'-bisphosphate + 2 H(+). It carries out the reaction (5Z,8Z,11Z,14Z)-eicosatetraenoyl-CoA + H2O = S-(5Z,8Z,11Z,14Z-eicosatetraenoyl)-4'-phosphopantetheine + adenosine 3',5'-bisphosphate + 2 H(+). The enzyme catalyses hexadecanoyl-CoA + H2O = S-hexadecanoyl-4'-phosphopantetheine + adenosine 3',5'-bisphosphate + 2 H(+). Functionally, fatty acyl-coenzyme A (CoA) diphosphatase that hydrolyzes fatty acyl-CoA to yield acyl-4'-phosphopantetheine and adenosine 3',5'-bisphosphate. Preferentially hydrolyzes unsaturated long-chain acyl-CoA substrates in the endoplasmic reticulum (ER) lumen. This catalytic activity is required for maintaining ER structure and for lipid droplets (LDs) biogenesis, which are lipid storage organelles involved in maintaining lipid and energy homeostasis. May directly bind to diacylglycerol (DAGs) and triacylglycerol, which is also important for LD biogenesis. May support directional budding of nacent LDs from the ER into the cytosol by reducing DAG levels at sites of LD formation. May play a role in the regulation of cell morphology and cytoskeletal organization. The polypeptide is Acyl-coenzyme A diphosphatase fit1 (Schizosaccharomyces pombe (strain 972 / ATCC 24843) (Fission yeast)).